We begin with the raw amino-acid sequence, 137 residues long: MEQTLSIIKPDAVAKNVVGKILDRFESAGLKIAATKKLQLSQADAEAFYAVHAARPFFKDLVEFMISGPVVVSVLEGENAMAKNRELMGATNPKEAAAGTIRADFADSIDANAVHGSDSLENAKNEIAFFFAQREIC.

Positions 9, 57, 85, 91, 102, and 112 each coordinate ATP. The Pros-phosphohistidine intermediate role is filled by His115.

It belongs to the NDK family. As to quaternary structure, homotetramer. It depends on Mg(2+) as a cofactor.

The protein resides in the cytoplasm. It catalyses the reaction a 2'-deoxyribonucleoside 5'-diphosphate + ATP = a 2'-deoxyribonucleoside 5'-triphosphate + ADP. The enzyme catalyses a ribonucleoside 5'-diphosphate + ATP = a ribonucleoside 5'-triphosphate + ADP. Its function is as follows. Major role in the synthesis of nucleoside triphosphates other than ATP. The ATP gamma phosphate is transferred to the NDP beta phosphate via a ping-pong mechanism, using a phosphorylated active-site intermediate. In Aliarcobacter butzleri (strain RM4018) (Arcobacter butzleri), this protein is Nucleoside diphosphate kinase.